Here is a 696-residue protein sequence, read N- to C-terminus: Putative zinc metalloproteinase YIL108W (696 aa).

Residue Lys-245 forms a Glycyl lysine isopeptide (Lys-Gly) (interchain with G-Cter in ubiquitin) linkage. Zn(2+) is bound at residue His-318. Glu-319 is a catalytic residue. Zn(2+) contacts are provided by His-322 and His-328. Ser-361 bears the Phosphoserine mark. Glycyl lysine isopeptide (Lys-Gly) (interchain with G-Cter in ubiquitin) cross-links involve residues Lys-478, Lys-518, Lys-579, Lys-590, and Lys-596. Residues 522-695 enclose the Jacalin-type lectin domain; sequence GIKSPLYGRS…VDAFGIIYGA (174 aa).

Belongs to the peptidase M10B family. Zn(2+) is required as a cofactor.

The protein resides in the cytoplasm. The polypeptide is Putative zinc metalloproteinase YIL108W (Saccharomyces cerevisiae (strain ATCC 204508 / S288c) (Baker's yeast)).